Here is a 165-residue protein sequence, read N- to C-terminus: Phosphopantetheine adenylyltransferase (165 aa).

T9 contacts substrate. ATP-binding positions include 9 to 10 and H17; that span reads TF. Residues K41, L73, and R87 each coordinate substrate. Residues 88–90, E98, and 123–129 each bind ATP; these read GLR and YMFISAT.

This sequence belongs to the bacterial CoaD family. In terms of assembly, homohexamer. The cofactor is Mg(2+).

It is found in the cytoplasm. It catalyses the reaction (R)-4'-phosphopantetheine + ATP + H(+) = 3'-dephospho-CoA + diphosphate. Its pathway is cofactor biosynthesis; coenzyme A biosynthesis; CoA from (R)-pantothenate: step 4/5. Functionally, reversibly transfers an adenylyl group from ATP to 4'-phosphopantetheine, yielding dephospho-CoA (dPCoA) and pyrophosphate. This is Phosphopantetheine adenylyltransferase from Nitrosospira multiformis (strain ATCC 25196 / NCIMB 11849 / C 71).